Here is a 911-residue protein sequence, read N- to C-terminus: Translation initiation factor IF-2 (911 aa).

2 stretches are compositionally biased toward basic and acidic residues: residues 80–94 (LEEQ…EQQL) and 101–113 (RPER…RTEV). Disordered regions lie at residues 80–142 (LEEQ…VSEP), 153–172 (VKSP…DVEG), and 195–309 (SSLG…KMRK). The span at 214–256 (KEQADELKDEFDIKAKEGGKEREAGGESRKPVKKGSEETKKTT) shows a compositional bias: basic and acidic residues. Residues 262 to 272 (AKKKKGKKKKK) are compositionally biased toward basic residues. A compositionally biased stretch (basic and acidic residues) spans 273–284 (PEVDEKTIEKNI). A compositionally biased stretch (low complexity) spans 286-300 (STISGMDDTSGSGSS). Residues 408–578 (IRPPVVTIMG…LTEAEIRELK (171 aa)) form the tr-type G domain. The G1 stretch occupies residues 417–424 (GHVDHGKT). 417-424 (GHVDHGKT) provides a ligand contact to GTP. A G2 region spans residues 442 to 446 (GITQH). Positions 464–467 (DTPG) are G3. Residues 464 to 468 (DTPGH) and 518 to 521 (NKID) each bind GTP. The G4 stretch occupies residues 518-521 (NKID). The interval 554-556 (SAK) is G5.

Belongs to the TRAFAC class translation factor GTPase superfamily. Classic translation factor GTPase family. IF-2 subfamily.

The protein localises to the cytoplasm. One of the essential components for the initiation of protein synthesis. Protects formylmethionyl-tRNA from spontaneous hydrolysis and promotes its binding to the 30S ribosomal subunits. Also involved in the hydrolysis of GTP during the formation of the 70S ribosomal complex. In Chlorobium phaeobacteroides (strain BS1), this protein is Translation initiation factor IF-2.